A 253-amino-acid polypeptide reads, in one-letter code: 5-oxoprolinase subunit A (253 aa).

This sequence belongs to the LamB/PxpA family. As to quaternary structure, forms a complex composed of PxpA, PxpB and PxpC.

It carries out the reaction 5-oxo-L-proline + ATP + 2 H2O = L-glutamate + ADP + phosphate + H(+). In terms of biological role, catalyzes the cleavage of 5-oxoproline to form L-glutamate coupled to the hydrolysis of ATP to ADP and inorganic phosphate. This is 5-oxoprolinase subunit A from Bacillus cereus (strain 03BB102).